The primary structure comprises 269 residues: Chymotrypsin-like elastase family member 2A (269 aa).

A signal peptide spans 1–16 (MIRTLLLSTLVAGALS). A propeptide spans 17-28 (CGDPTYPPYVTR) (activation peptide). Residues 29–267 (VVGGEEARPN…YIDWINSVIA (239 aa)) form the Peptidase S1 domain. A disulfide bond links Cys-58 and Cys-74. Residues His-73 and Asp-121 each act as charge relay system in the active site. 3 disulfide bridges follow: Cys-155–Cys-222, Cys-186–Cys-202, and Cys-212–Cys-243. Ser-216 functions as the Charge relay system in the catalytic mechanism.

It belongs to the peptidase S1 family. Elastase subfamily. As to quaternary structure, interacts with CPA1. Interacts with SERPINA1. In terms of tissue distribution, expressed in pancreas. Not detected in keratinocytes. Detected in exocrine secretions of the pancreas (at protein level). Also expressed in a small fraction of cells in pancreatic islets, adrenal cortex, intestinal glands and colonic lymphoid follicles (at protein level). Detected in plasma.

Its subcellular location is the secreted. It carries out the reaction Preferential cleavage: Leu-|-Xaa, Met-|-Xaa and Phe-|-Xaa. Hydrolyzes elastin.. Elastase that enhances insulin signaling and might have a physiologic role in cellular glucose metabolism. Circulates in plasma and reduces platelet hyperactivation, triggers both insulin secretion and degradation, and increases insulin sensitivity. In Homo sapiens (Human), this protein is Chymotrypsin-like elastase family member 2A.